We begin with the raw amino-acid sequence, 79 residues long: Small ribosomal subunit protein bS16 (79 aa).

This sequence belongs to the bacterial ribosomal protein bS16 family.

The protein is Small ribosomal subunit protein bS16 of Hahella chejuensis (strain KCTC 2396).